We begin with the raw amino-acid sequence, 126 residues long: Holo-[acyl-carrier-protein] synthase (126 aa).

Aspartate 9 and glutamate 58 together coordinate Mg(2+).

The protein belongs to the P-Pant transferase superfamily. AcpS family. Requires Mg(2+) as cofactor.

It localises to the cytoplasm. The enzyme catalyses apo-[ACP] + CoA = holo-[ACP] + adenosine 3',5'-bisphosphate + H(+). In terms of biological role, transfers the 4'-phosphopantetheine moiety from coenzyme A to a Ser of acyl-carrier-protein. This chain is Holo-[acyl-carrier-protein] synthase, found in Aliivibrio salmonicida (strain LFI1238) (Vibrio salmonicida (strain LFI1238)).